Here is an 81-residue protein sequence, read N- to C-terminus: ATP synthase subunit c, chloroplastic (81 aa).

2 helical membrane passes run 3 to 23 (PIIC…GAIG) and 57 to 77 (LAFM…IIFA).

This sequence belongs to the ATPase C chain family. F-type ATPases have 2 components, F(1) - the catalytic core - and F(0) - the membrane proton channel. F(1) has five subunits: alpha(3), beta(3), gamma(1), delta(1), epsilon(1). F(0) has four main subunits: a(1), b(1), b'(1) and c(10-14). The alpha and beta chains form an alternating ring which encloses part of the gamma chain. F(1) is attached to F(0) by a central stalk formed by the gamma and epsilon chains, while a peripheral stalk is formed by the delta, b and b' chains.

It localises to the plastid. The protein resides in the chloroplast thylakoid membrane. F(1)F(0) ATP synthase produces ATP from ADP in the presence of a proton or sodium gradient. F-type ATPases consist of two structural domains, F(1) containing the extramembraneous catalytic core and F(0) containing the membrane proton channel, linked together by a central stalk and a peripheral stalk. During catalysis, ATP synthesis in the catalytic domain of F(1) is coupled via a rotary mechanism of the central stalk subunits to proton translocation. Its function is as follows. Key component of the F(0) channel; it plays a direct role in translocation across the membrane. A homomeric c-ring of between 10-14 subunits forms the central stalk rotor element with the F(1) delta and epsilon subunits. The polypeptide is ATP synthase subunit c, chloroplastic (Euglena gracilis).